The chain runs to 336 residues: Large ribosomal subunit protein uL10 (336 aa).

The segment at 292–336 (LKEKLSSRAAAPAPEEKEEEVEEEAEEEEEEEEEDAAAGLGALFG) is disordered. Acidic residues predominate over residues 307–327 (EKEEEVEEEAEEEEEEEEEDA).

It belongs to the universal ribosomal protein uL10 family. In terms of assembly, part of the 50S ribosomal subunit. Forms part of the ribosomal stalk which helps the ribosome interact with GTP-bound translation factors. Forms a heptameric L10(L12)2(L12)2(L12)2 complex, where L10 forms an elongated spine to which the L12 dimers bind in a sequential fashion.

Functionally, forms part of the ribosomal stalk, playing a central role in the interaction of the ribosome with GTP-bound translation factors. This chain is Large ribosomal subunit protein uL10, found in Methanothermobacter thermautotrophicus (strain ATCC 29096 / DSM 1053 / JCM 10044 / NBRC 100330 / Delta H) (Methanobacterium thermoautotrophicum).